The following is a 496-amino-acid chain: Glycerol kinase (496 aa).

Thr-11 is a binding site for ADP. 3 residues coordinate ATP: Thr-11, Thr-12, and Ser-13. A sn-glycerol 3-phosphate-binding site is contributed by Thr-11. Arg-15 contributes to the ADP binding site. Residues Arg-81, Glu-82, Tyr-133, and Asp-242 each coordinate sn-glycerol 3-phosphate. Arg-81, Glu-82, Tyr-133, Asp-242, and Gln-243 together coordinate glycerol. The ADP site is built by Thr-264 and Gly-307. Residues Thr-264, Gly-307, Gln-311, and Gly-408 each coordinate ATP. 2 residues coordinate ADP: Gly-408 and Asn-412.

This sequence belongs to the FGGY kinase family.

It carries out the reaction glycerol + ATP = sn-glycerol 3-phosphate + ADP + H(+). The protein operates within polyol metabolism; glycerol degradation via glycerol kinase pathway; sn-glycerol 3-phosphate from glycerol: step 1/1. Inhibited by fructose 1,6-bisphosphate (FBP). Functionally, key enzyme in the regulation of glycerol uptake and metabolism. Catalyzes the phosphorylation of glycerol to yield sn-glycerol 3-phosphate. This chain is Glycerol kinase, found in Trichlorobacter lovleyi (strain ATCC BAA-1151 / DSM 17278 / SZ) (Geobacter lovleyi).